Consider the following 545-residue polypeptide: T-complex protein 1 subunit alpha (545 aa).

At Ser-2 the chain carries N-acetylserine.

Belongs to the TCP-1 chaperonin family. As to quaternary structure, heterooligomeric complex of about 850 to 900 kDa that forms two stacked rings, 12 to 16 nm in diameter.

It localises to the cytoplasm. In terms of biological role, molecular chaperone; assists the folding of proteins upon ATP hydrolysis. Known to play a role, in vitro, in the folding of actin and tubulin. The protein is T-complex protein 1 subunit alpha of Arabidopsis thaliana (Mouse-ear cress).